Reading from the N-terminus, the 383-residue chain is tRNA-specific 2-thiouridylase MnmA (383 aa).

ATP is bound by residues Gly29–Ser36 and Met55. The tract at residues Asn115–Asp117 is interaction with target base in tRNA. The active-site Nucleophile is Cys120. A disulfide bridge links Cys120 with Cys217. ATP is bound at residue Gly145. The interaction with tRNA stretch occupies residues Lys167–Gln169. The active-site Cysteine persulfide intermediate is the Cys217. The segment at Arg329–Tyr330 is interaction with tRNA.

Belongs to the MnmA/TRMU family.

The protein localises to the cytoplasm. It catalyses the reaction S-sulfanyl-L-cysteinyl-[protein] + uridine(34) in tRNA + AH2 + ATP = 2-thiouridine(34) in tRNA + L-cysteinyl-[protein] + A + AMP + diphosphate + H(+). Its function is as follows. Catalyzes the 2-thiolation of uridine at the wobble position (U34) of tRNA, leading to the formation of s(2)U34. In Histophilus somni (strain 129Pt) (Haemophilus somnus), this protein is tRNA-specific 2-thiouridylase MnmA.